The following is a 122-amino-acid chain: Large ribosomal subunit protein uL14 (122 aa).

It belongs to the universal ribosomal protein uL14 family. In terms of assembly, part of the 50S ribosomal subunit. Forms a cluster with proteins L3 and L19. In the 70S ribosome, L14 and L19 interact and together make contacts with the 16S rRNA in bridges B5 and B8.

Its function is as follows. Binds to 23S rRNA. Forms part of two intersubunit bridges in the 70S ribosome. The sequence is that of Large ribosomal subunit protein uL14 from Fervidobacterium nodosum (strain ATCC 35602 / DSM 5306 / Rt17-B1).